The following is a 180-amino-acid chain: GTP cyclohydrolase 1 (180 aa).

3 residues coordinate Zn(2+): Cys-71, His-74, and Cys-142.

This sequence belongs to the GTP cyclohydrolase I family. In terms of assembly, toroid-shaped homodecamer, composed of two pentamers of five dimers.

The enzyme catalyses GTP + H2O = 7,8-dihydroneopterin 3'-triphosphate + formate + H(+). The protein operates within cofactor biosynthesis; 7,8-dihydroneopterin triphosphate biosynthesis; 7,8-dihydroneopterin triphosphate from GTP: step 1/1. This is GTP cyclohydrolase 1 (folE) from Helicobacter pylori (strain J99 / ATCC 700824) (Campylobacter pylori J99).